Here is a 124-residue protein sequence, read N- to C-terminus: Fluoride-specific ion channel FluC (124 aa).

4 helical membrane passes run 5–25 (FLQVALGGALGSAARYGVNIL), 35–55 (LGTLSVNIAGCLAMGLLAALL), 63–83 (LAPFLLTGMLGGFTTFSAFAL), and 98–118 (LGYVLGSVVLSLAAVIAGLTV). Na(+)-binding residues include Gly73 and Thr76.

This sequence belongs to the fluoride channel Fluc/FEX (TC 1.A.43) family.

Its subcellular location is the cell inner membrane. It catalyses the reaction fluoride(in) = fluoride(out). Its activity is regulated as follows. Na(+) is not transported, but it plays an essential structural role and its presence is essential for fluoride channel function. In terms of biological role, fluoride-specific ion channel. Important for reducing fluoride concentration in the cell, thus reducing its toxicity. In Paracoccus denitrificans (strain Pd 1222), this protein is Fluoride-specific ion channel FluC.